A 334-amino-acid polypeptide reads, in one-letter code: Aspartate carbamoyltransferase catalytic subunit (334 aa).

Arg71 and Thr72 together coordinate carbamoyl phosphate. Lys99 is an L-aspartate binding site. The carbamoyl phosphate site is built by Arg121, His151, and Gln154. Arg184 and Arg239 together coordinate L-aspartate. Residues Gly280 and Pro281 each coordinate carbamoyl phosphate.

The protein belongs to the aspartate/ornithine carbamoyltransferase superfamily. ATCase family. Heterododecamer (2C3:3R2) of six catalytic PyrB chains organized as two trimers (C3), and six regulatory PyrI chains organized as three dimers (R2).

The catalysed reaction is carbamoyl phosphate + L-aspartate = N-carbamoyl-L-aspartate + phosphate + H(+). It functions in the pathway pyrimidine metabolism; UMP biosynthesis via de novo pathway; (S)-dihydroorotate from bicarbonate: step 2/3. Its function is as follows. Catalyzes the condensation of carbamoyl phosphate and aspartate to form carbamoyl aspartate and inorganic phosphate, the committed step in the de novo pyrimidine nucleotide biosynthesis pathway. The chain is Aspartate carbamoyltransferase catalytic subunit from Pseudomonas putida (strain ATCC 47054 / DSM 6125 / CFBP 8728 / NCIMB 11950 / KT2440).